A 558-amino-acid polypeptide reads, in one-letter code: uncharacterized protein (558 aa).

12 consecutive transmembrane segments (helical) span residues 21–41 (IFCF…LPIA), 69–89 (FLDA…STVV), 100–120 (IVLA…AFLA), 160–180 (IIFL…LFYF), 220–240 (AFQA…IDLI), 251–271 (GLGI…GIGY), 303–323 (VITN…VEFI), 386–406 (VFPV…AMFI), 413–433 (TAGG…VAKF), 454–474 (AFLV…LLPL), 479–499 (PVSF…VGLS), and 519–539 (ALCL…LTFV).

Belongs to the TrkH potassium transport family.

The protein resides in the cell membrane. This is an uncharacterized protein from Mycoplasma genitalium (strain ATCC 33530 / DSM 19775 / NCTC 10195 / G37) (Mycoplasmoides genitalium).